We begin with the raw amino-acid sequence, 526 residues long: Peptide chain release factor 3 (526 aa).

Residues 8–277 (NKRRTFAIIS…GLTQWAPAPQ (270 aa)) enclose the tr-type G domain. GTP is bound by residues 17–24 (SHPDAGKT), 85–89 (DTPGH), and 139–142 (NKLD).

The protein belongs to the TRAFAC class translation factor GTPase superfamily. Classic translation factor GTPase family. PrfC subfamily.

The protein localises to the cytoplasm. Functionally, increases the formation of ribosomal termination complexes and stimulates activities of RF-1 and RF-2. It binds guanine nucleotides and has strong preference for UGA stop codons. It may interact directly with the ribosome. The stimulation of RF-1 and RF-2 is significantly reduced by GTP and GDP, but not by GMP. This Histophilus somni (strain 2336) (Haemophilus somnus) protein is Peptide chain release factor 3.